The chain runs to 72 residues: Translation initiation factor IF-1 (72 aa).

The region spanning 1-72 (MAKDDVIEVD…DKGRITFRYK (72 aa)) is the S1-like domain.

Belongs to the IF-1 family. In terms of assembly, component of the 30S ribosomal translation pre-initiation complex which assembles on the 30S ribosome in the order IF-2 and IF-3, IF-1 and N-formylmethionyl-tRNA(fMet); mRNA recruitment can occur at any time during PIC assembly.

It localises to the cytoplasm. Its function is as follows. One of the essential components for the initiation of protein synthesis. Stabilizes the binding of IF-2 and IF-3 on the 30S subunit to which N-formylmethionyl-tRNA(fMet) subsequently binds. Helps modulate mRNA selection, yielding the 30S pre-initiation complex (PIC). Upon addition of the 50S ribosomal subunit IF-1, IF-2 and IF-3 are released leaving the mature 70S translation initiation complex. This Wolinella succinogenes (strain ATCC 29543 / DSM 1740 / CCUG 13145 / JCM 31913 / LMG 7466 / NCTC 11488 / FDC 602W) (Vibrio succinogenes) protein is Translation initiation factor IF-1.